We begin with the raw amino-acid sequence, 385 residues long: MTAISLGMPSVPTKLAERRKSRQIQVGTVAVGGDAPVSVQSMTTTRTSDIGATLQQIAELTASGCQIVRVACPTQDDADALAVIARKSQIPVIADIHFQPKYVFAAIEAGCAAVRVNPGNIKQFDDKVKEIAKAAKEHGTPIRIGVNAGSLDRRLLEKYGKATPEALVESALWEASLFEEHDFRDIKISVKHNDPVVMVNAYRQLAAQCDYPLHLGVTEAGPAFQGTIKSAVAFGALLSEGIGDTIRVSLSAPPVEEIKVGIQILESLNLRQRGLEIVSCPSCGRAQVDVYKLAEEVTAGLEGMEVPLRVAVMGCVVNGPGEAREADLGVASGNGKGQIFVKGEIIKTVPESKIVETLIEEAMKIAEQMEADGIASGEPSVSVAG.

[4Fe-4S] cluster is bound by residues cysteine 280, cysteine 283, cysteine 315, and glutamate 322.

This sequence belongs to the IspG family. [4Fe-4S] cluster is required as a cofactor.

It catalyses the reaction (2E)-4-hydroxy-3-methylbut-2-enyl diphosphate + oxidized [flavodoxin] + H2O + 2 H(+) = 2-C-methyl-D-erythritol 2,4-cyclic diphosphate + reduced [flavodoxin]. Its pathway is isoprenoid biosynthesis; isopentenyl diphosphate biosynthesis via DXP pathway; isopentenyl diphosphate from 1-deoxy-D-xylulose 5-phosphate: step 5/6. Converts 2C-methyl-D-erythritol 2,4-cyclodiphosphate (ME-2,4cPP) into 1-hydroxy-2-methyl-2-(E)-butenyl 4-diphosphate. The protein is 4-hydroxy-3-methylbut-2-en-1-yl diphosphate synthase (flavodoxin) 1 of Streptomyces avermitilis (strain ATCC 31267 / DSM 46492 / JCM 5070 / NBRC 14893 / NCIMB 12804 / NRRL 8165 / MA-4680).